A 734-amino-acid polypeptide reads, in one-letter code: Photosystem I P700 chlorophyll a apoprotein A2 (734 aa).

8 consecutive transmembrane segments (helical) span residues 46 to 69 (IFAS…FHVA), 135 to 158 (LYTG…LHLQ), 175 to 199 (LNHH…HVAI), 273 to 291 (MAHH…GHMY), 330 to 353 (IHFQ…QHMY), 369 to 395 (AALY…IFFI), 417 to 439 (AIKS…LYVH), and 517 to 535 (FLVH…LILV). Residues Cys-559 and Cys-568 each coordinate [4Fe-4S] cluster. The next 2 helical transmembrane spans lie at 575–596 (AFYL…YWHW) and 643–665 (LSVW…MFLI). Chlorophyll a-binding residues include His-654, Met-662, and Tyr-670. Trp-671 provides a ligand contact to phylloquinone. A helical membrane pass occupies residues 707-727 (LVGLAHFSVGYIFTYAAFLIA).

It belongs to the PsaA/PsaB family. The PsaA/B heterodimer binds the P700 chlorophyll special pair and subsequent electron acceptors. PSI consists of a core antenna complex that captures photons, and an electron transfer chain that converts photonic excitation into a charge separation. The eukaryotic PSI reaction center is composed of at least 11 subunits. P700 is a chlorophyll a/chlorophyll a' dimer, A0 is one or more chlorophyll a, A1 is one or both phylloquinones and FX is a shared 4Fe-4S iron-sulfur center. is required as a cofactor.

Its subcellular location is the plastid. It is found in the chloroplast thylakoid membrane. The enzyme catalyses reduced [plastocyanin] + hnu + oxidized [2Fe-2S]-[ferredoxin] = oxidized [plastocyanin] + reduced [2Fe-2S]-[ferredoxin]. Functionally, psaA and PsaB bind P700, the primary electron donor of photosystem I (PSI), as well as the electron acceptors A0, A1 and FX. PSI is a plastocyanin-ferredoxin oxidoreductase, converting photonic excitation into a charge separation, which transfers an electron from the donor P700 chlorophyll pair to the spectroscopically characterized acceptors A0, A1, FX, FA and FB in turn. Oxidized P700 is reduced on the lumenal side of the thylakoid membrane by plastocyanin. This Chloranthus spicatus (Chulantree) protein is Photosystem I P700 chlorophyll a apoprotein A2.